A 487-amino-acid polypeptide reads, in one-letter code: Reticulon-like protein B21 (487 aa).

Residues 1–22 are compositionally biased toward low complexity; sequence MTPRRSLSSSDSNDKSPSVSVV. 3 disordered regions span residues 1–43, 65–86, and 113–149; these read MTPR…PGRV, LRKV…TEQE, and KSNE…EKKS. Basic and acidic residues predominate over residues 26-38; sequence ARSESVEGIEKKT. Positions 118–143 are enriched in acidic residues; the sequence is EQIDNGDQEIGDQDDYEEDGDEEEER. Residues 230-419 enclose the Reticulon domain; sequence LVDLVMWRDV…FTLVWNLSSV (190 aa). 4 helical membrane passes run 242-262, 264-284, 354-374, and 413-433; these read STLV…ANDL, FSFI…MFVL, ITLW…PKIF, and VWNL…LVAF. Positions 446–463 are enriched in acidic residues; it reads QADDDEDDNEEEEAEEEK. Residues 446 to 487 form a disordered region; sequence QADDDEDDNEEEEAEEEKEQVPPKHKRAPPHMMMPNKLKKIS.

Its subcellular location is the endoplasmic reticulum membrane. This chain is Reticulon-like protein B21 (RTNLB21), found in Arabidopsis thaliana (Mouse-ear cress).